The chain runs to 607 residues: Glycosyltransferase 25 family member (607 aa).

Positions 1 to 22 (MKPVSCVGLLVLLVGVLVTVKG) are cleaved as a signal peptide. 4 N-linked (GlcNAc...) asparagine glycosylation sites follow: Asn226, Asn254, Asn514, and Asn565. Positions 566 to 607 (DTSDSSAEKKGDKEQLSSKTLMDSTISRDEHELSVANRKSEL) are disordered. Basic and acidic residues-rich tracts occupy residues 571–581 (SAEKKGDKEQL) and 591–607 (ISRD…KSEL). A Prevents secretion from ER motif is present at residues 604–607 (KSEL).

Belongs to the glycosyltransferase 25 family.

It is found in the endoplasmic reticulum lumen. The polypeptide is Glycosyltransferase 25 family member (Aedes aegypti (Yellowfever mosquito)).